We begin with the raw amino-acid sequence, 77 residues long: Large ribosomal subunit protein bL28 (77 aa).

It belongs to the bacterial ribosomal protein bL28 family.

This Dechloromonas aromatica (strain RCB) protein is Large ribosomal subunit protein bL28.